An 838-amino-acid chain; its full sequence is G-protein coupled receptor-associated sorting protein 2 (838 aa).

Disordered regions lie at residues 1–121 (MTGA…PGAR), 218–293 (ASNE…NPFS), and 531–552 (LELS…PSPE). Residues 13 to 31 (KPEKKAGEEVVAGPEREND) show a composition bias toward basic and acidic residues. Residues 220–235 (NESGFWSADETSTASS) show a composition bias toward polar residues. Residues 255–271 (RSRHRAKHQTNPRSRPR) show a composition bias toward basic residues. Phosphoserine is present on residues Ser282 and Ser284. Positions 542–552 (SLLQPDQPSPE) are enriched in polar residues.

This sequence belongs to the GPRASP family. Interacts with cytoplasmic tails of a variety of G protein-coupled receptors such as muscarinic acetylcholine receptor M1/CHRM1 and calcitonin receptor/CALCR.

May play a role in regulation of a variety of G-protein coupled receptors. The sequence is that of G-protein coupled receptor-associated sorting protein 2 (GPRASP2) from Pongo abelii (Sumatran orangutan).